The sequence spans 264 residues: Shikimate dehydrogenase (NADP(+)) (264 aa).

Shikimate-binding positions include 14–16 (SLS) and threonine 59. The active-site Proton acceptor is the lysine 63. Glutamate 75 is an NADP(+) binding site. Shikimate-binding residues include asparagine 84 and aspartate 99. Residues 122–126 (GAGGA), 144–149 (NRTPSK), and isoleucine 205 contribute to the NADP(+) site. Tyrosine 207 is a binding site for shikimate. NADP(+) is bound at residue glycine 228.

Belongs to the shikimate dehydrogenase family. In terms of assembly, homodimer.

The catalysed reaction is shikimate + NADP(+) = 3-dehydroshikimate + NADPH + H(+). Its pathway is metabolic intermediate biosynthesis; chorismate biosynthesis; chorismate from D-erythrose 4-phosphate and phosphoenolpyruvate: step 4/7. Functionally, involved in the biosynthesis of the chorismate, which leads to the biosynthesis of aromatic amino acids. Catalyzes the reversible NADPH linked reduction of 3-dehydroshikimate (DHSA) to yield shikimate (SA). In Pyrococcus abyssi (strain GE5 / Orsay), this protein is Shikimate dehydrogenase (NADP(+)).